The primary structure comprises 198 residues: NAD(P)H dehydrogenase (quinone) (198 aa).

The 187-residue stretch at 4–190 (VLVLYYSAYG…EGAKYQGAHV (187 aa)) folds into the Flavodoxin-like domain. FMN contacts are provided by residues 10–15 (SAYGHI) and 78–80 (TRF). Residue tyrosine 12 coordinates NAD(+). Tryptophan 98 is a binding site for substrate. Residues 113 to 119 (SSATQHG) and histidine 134 each bind FMN.

The protein belongs to the WrbA family. The cofactor is FMN.

It carries out the reaction a quinone + NADH + H(+) = a quinol + NAD(+). The catalysed reaction is a quinone + NADPH + H(+) = a quinol + NADP(+). The protein is NAD(P)H dehydrogenase (quinone) of Rhizobium johnstonii (strain DSM 114642 / LMG 32736 / 3841) (Rhizobium leguminosarum bv. viciae).